Here is a 137-residue protein sequence, read N- to C-terminus: Large ribosomal subunit protein uL16 (137 aa).

It belongs to the universal ribosomal protein uL16 family. Part of the 50S ribosomal subunit.

In terms of biological role, binds 23S rRNA and is also seen to make contacts with the A and possibly P site tRNAs. In Cereibacter sphaeroides (strain ATCC 17025 / ATH 2.4.3) (Rhodobacter sphaeroides), this protein is Large ribosomal subunit protein uL16.